The primary structure comprises 838 residues: Histidine biosynthesis trifunctional protein (838 aa).

Residues 1–271 are phosphoribosyl-AMP cyclohydrolase; sequence MIFPILPVIS…MVEPRTGYGF (271 aa). Positions 272 to 360 are phosphoribosyl-ATP pyrophosphohydrolase; the sequence is CHRETKFTCF…VYFAMVWCIK (89 aa). The segment at 361-838 is histidinol dehydrogenase; that stretch reads HGVRLADIEK…IRMERMAETK (478 aa). Residues Gln-660 and His-663 each contribute to the Zn(2+) site. Catalysis depends on residues Glu-729 and His-730. Zn(2+) is bound by residues Asp-764 and His-823.

The protein in the C-terminal section; belongs to the histidinol dehydrogenase family. It depends on Zn(2+) as a cofactor.

The enzyme catalyses 1-(5-phospho-beta-D-ribosyl)-5'-AMP + H2O = 1-(5-phospho-beta-D-ribosyl)-5-[(5-phospho-beta-D-ribosylamino)methylideneamino]imidazole-4-carboxamide. It catalyses the reaction 1-(5-phospho-beta-D-ribosyl)-ATP + H2O = 1-(5-phospho-beta-D-ribosyl)-5'-AMP + diphosphate + H(+). The catalysed reaction is L-histidinol + 2 NAD(+) + H2O = L-histidine + 2 NADH + 3 H(+). Its pathway is amino-acid biosynthesis; L-histidine biosynthesis; L-histidine from 5-phospho-alpha-D-ribose 1-diphosphate: step 2/9. It functions in the pathway amino-acid biosynthesis; L-histidine biosynthesis; L-histidine from 5-phospho-alpha-D-ribose 1-diphosphate: step 3/9. The protein operates within amino-acid biosynthesis; L-histidine biosynthesis; L-histidine from 5-phospho-alpha-D-ribose 1-diphosphate: step 9/9. This is Histidine biosynthesis trifunctional protein (HIS4) from Candida albicans (Yeast).